Consider the following 329-residue polypeptide: 4-hydroxythreonine-4-phosphate dehydrogenase (329 aa).

Residues histidine 136 and threonine 137 each coordinate substrate. A divalent metal cation is bound by residues histidine 166, histidine 211, and histidine 266. The substrate site is built by lysine 274, asparagine 283, and arginine 292.

The protein belongs to the PdxA family. As to quaternary structure, homodimer. Requires Zn(2+) as cofactor. Mg(2+) is required as a cofactor. It depends on Co(2+) as a cofactor.

The protein localises to the cytoplasm. It carries out the reaction 4-(phosphooxy)-L-threonine + NAD(+) = 3-amino-2-oxopropyl phosphate + CO2 + NADH. The protein operates within cofactor biosynthesis; pyridoxine 5'-phosphate biosynthesis; pyridoxine 5'-phosphate from D-erythrose 4-phosphate: step 4/5. Its function is as follows. Catalyzes the NAD(P)-dependent oxidation of 4-(phosphooxy)-L-threonine (HTP) into 2-amino-3-oxo-4-(phosphooxy)butyric acid which spontaneously decarboxylates to form 3-amino-2-oxopropyl phosphate (AHAP). This chain is 4-hydroxythreonine-4-phosphate dehydrogenase, found in Escherichia coli O139:H28 (strain E24377A / ETEC).